We begin with the raw amino-acid sequence, 108 residues long: ATP-dependent Clp protease adapter protein ClpS (108 aa).

This sequence belongs to the ClpS family. Binds to the N-terminal domain of the chaperone ClpA.

In terms of biological role, involved in the modulation of the specificity of the ClpAP-mediated ATP-dependent protein degradation. This Cupriavidus necator (strain ATCC 17699 / DSM 428 / KCTC 22496 / NCIMB 10442 / H16 / Stanier 337) (Ralstonia eutropha) protein is ATP-dependent Clp protease adapter protein ClpS.